The primary structure comprises 299 residues: 4-diphosphocytidyl-2-C-methyl-D-erythritol kinase (299 aa).

Lys18 is an active-site residue. Residue 104–114 participates in ATP binding; that stretch reads PIASGIGGGSS. Residue Asp146 is part of the active site.

Belongs to the GHMP kinase family. IspE subfamily.

The catalysed reaction is 4-CDP-2-C-methyl-D-erythritol + ATP = 4-CDP-2-C-methyl-D-erythritol 2-phosphate + ADP + H(+). Its pathway is isoprenoid biosynthesis; isopentenyl diphosphate biosynthesis via DXP pathway; isopentenyl diphosphate from 1-deoxy-D-xylulose 5-phosphate: step 3/6. Its function is as follows. Catalyzes the phosphorylation of the position 2 hydroxy group of 4-diphosphocytidyl-2C-methyl-D-erythritol. The sequence is that of 4-diphosphocytidyl-2-C-methyl-D-erythritol kinase from Brucella abortus biovar 1 (strain 9-941).